A 142-amino-acid chain; its full sequence is Small ribosomal subunit protein uS12 (142 aa).

This sequence belongs to the universal ribosomal protein uS12 family. Part of the 30S ribosomal subunit.

In terms of biological role, with S4 and S5 plays an important role in translational accuracy. Located at the interface of the 30S and 50S subunits. The polypeptide is Small ribosomal subunit protein uS12 (Methanospirillum hungatei JF-1 (strain ATCC 27890 / DSM 864 / NBRC 100397 / JF-1)).